Reading from the N-terminus, the 469-residue chain is 3-isopropylmalate dehydratase large subunit (469 aa).

Positions 350, 410, and 413 each coordinate [4Fe-4S] cluster.

The protein belongs to the aconitase/IPM isomerase family. LeuC type 1 subfamily. As to quaternary structure, heterodimer of LeuC and LeuD. [4Fe-4S] cluster serves as cofactor.

It catalyses the reaction (2R,3S)-3-isopropylmalate = (2S)-2-isopropylmalate. The protein operates within amino-acid biosynthesis; L-leucine biosynthesis; L-leucine from 3-methyl-2-oxobutanoate: step 2/4. Catalyzes the isomerization between 2-isopropylmalate and 3-isopropylmalate, via the formation of 2-isopropylmaleate. The chain is 3-isopropylmalate dehydratase large subunit from Rhizobium leguminosarum bv. trifolii (strain WSM2304).